Here is a 434-residue protein sequence, read N- to C-terminus: Magnesium transporter MRS2 homolog, mitochondrial (434 aa).

A mitochondrion-targeting transit peptide spans 1-53; sequence MECLRCLPGLLPRAAQPRRALWTAVARLSLAACGGRATPLRSRSPKASSTARA. The Mitochondrial matrix segment spans residues 54 to 330; the sequence is AGDVLRFRTS…SHRNVMMRLN (277 aa). Mg(2+) is bound by residues Glu234, Thr237, Asp238, Glu303, and Asp320. Residues 331-350 form a helical membrane-spanning segment; sequence LQLTMGTFSLSLFGLMGVAF. Mg(2+)-binding residues include Gly351 and Asn353. The GMN motif signature appears at 351-353; sequence GMN. Over 351-361 the chain is Mitochondrial intermembrane; the sequence is GMNLESSLEED. The chain crosses the membrane as a helical span at residues 362 to 392; the sequence is HRVFWLVTGIMFMGSGLIWRRLLSFLGRQLE. Topologically, residues 393–434 are mitochondrial matrix; that stretch reads APVPPVMTSLPKKTLLANRRMDVKNSLRPEGLGASRTILASR.

This sequence belongs to the CorA metal ion transporter (MIT) (TC 1.A.35) family. In terms of assembly, homopentamer. In terms of tissue distribution, ubiquitously expressed.

It is found in the mitochondrion inner membrane. May be regulated by calcium ions. In terms of biological role, magnesium transporter that mediates the influx of magnesium into the mitochondrial matrix and regulates magnesium metabolism. Also permeable to calcium, sodium and potassium ions. Required for normal expression of the mitochondrial respiratory complex I subunits. May play a role in maintaining the inner mitochondrial membrane potential. This Mus musculus (Mouse) protein is Magnesium transporter MRS2 homolog, mitochondrial (Mrs2).